A 179-amino-acid chain; its full sequence is Large ribosomal subunit protein uL5 (179 aa).

The protein belongs to the universal ribosomal protein uL5 family. In terms of assembly, part of the 50S ribosomal subunit; part of the 5S rRNA/L5/L18/L25 subcomplex. Contacts the 5S rRNA and the P site tRNA. Forms a bridge to the 30S subunit in the 70S ribosome.

Functionally, this is one of the proteins that bind and probably mediate the attachment of the 5S RNA into the large ribosomal subunit, where it forms part of the central protuberance. In the 70S ribosome it contacts protein S13 of the 30S subunit (bridge B1b), connecting the 2 subunits; this bridge is implicated in subunit movement. Contacts the P site tRNA; the 5S rRNA and some of its associated proteins might help stabilize positioning of ribosome-bound tRNAs. The protein is Large ribosomal subunit protein uL5 of Marinomonas sp. (strain MWYL1).